Consider the following 297-residue polypeptide: tRNA dimethylallyltransferase (297 aa).

10–17 (APTGAGKT) provides a ligand contact to ATP. 12 to 17 (TGAGKT) contributes to the substrate binding site. Positions 34-37 (DSRQ) are interaction with substrate tRNA.

Belongs to the IPP transferase family. Monomer. The cofactor is Mg(2+).

It catalyses the reaction adenosine(37) in tRNA + dimethylallyl diphosphate = N(6)-dimethylallyladenosine(37) in tRNA + diphosphate. Functionally, catalyzes the transfer of a dimethylallyl group onto the adenine at position 37 in tRNAs that read codons beginning with uridine, leading to the formation of N6-(dimethylallyl)adenosine (i(6)A). The polypeptide is tRNA dimethylallyltransferase (Leptospira interrogans serogroup Icterohaemorrhagiae serovar Lai (strain 56601)).